Here is a 264-residue protein sequence, read N- to C-terminus: 3-methyl-2-oxobutanoate hydroxymethyltransferase (264 aa).

2 residues coordinate Mg(2+): D45 and D84. Residues 45-46 (DS), D84, and K112 each bind 3-methyl-2-oxobutanoate. E114 provides a ligand contact to Mg(2+). The active-site Proton acceptor is E181.

The protein belongs to the PanB family. As to quaternary structure, homodecamer; pentamer of dimers. Mg(2+) is required as a cofactor.

The protein resides in the cytoplasm. It catalyses the reaction 3-methyl-2-oxobutanoate + (6R)-5,10-methylene-5,6,7,8-tetrahydrofolate + H2O = 2-dehydropantoate + (6S)-5,6,7,8-tetrahydrofolate. It functions in the pathway cofactor biosynthesis; (R)-pantothenate biosynthesis; (R)-pantoate from 3-methyl-2-oxobutanoate: step 1/2. Its function is as follows. Catalyzes the reversible reaction in which hydroxymethyl group from 5,10-methylenetetrahydrofolate is transferred onto alpha-ketoisovalerate to form ketopantoate. The protein is 3-methyl-2-oxobutanoate hydroxymethyltransferase of Vibrio vulnificus (strain YJ016).